The following is a 736-amino-acid chain: Acyl-coenzyme A oxidase (736 aa).

This sequence belongs to the acyl-CoA oxidase family. The cofactor is FAD.

Its subcellular location is the peroxisome. It carries out the reaction a 2,3-saturated acyl-CoA + O2 = a (2E)-enoyl-CoA + H2O2. It participates in lipid metabolism; peroxisomal fatty acid beta-oxidation. This is Acyl-coenzyme A oxidase (POX1) from Kluyveromyces lactis (strain ATCC 8585 / CBS 2359 / DSM 70799 / NBRC 1267 / NRRL Y-1140 / WM37) (Yeast).